A 261-amino-acid chain; its full sequence is MAHQAHAYHMVDPSPWPLTGAIAALLLTSGTAVWFHFHSLTLLTLGNVLLLLTMYQWWRDIIREGTFQGHHTPPVQKGLRYGMILFITSEVFFFLGFFWAFYHASLAPTPELGGCWPPTGITTLDPFEVPLLNTAVLLASGVTVTWAHHSIMEGERKQTIQALTLTILLGFYFTFLQGMEYYEAPFTIADGVYGSTFFVATGFHGLHVIIGSTFLAVCLLRQVQYHFTSEHHFGFEAAAWYWHFVDVVWLFLYVSIYWWGS.

At 1-15 (MAHQAHAYHMVDPSP) the chain is on the mitochondrial matrix side. A helical transmembrane segment spans residues 16–34 (WPLTGAIAALLLTSGTAVW). Over 35-40 (FHFHSL) the chain is Mitochondrial intermembrane. The chain crosses the membrane as a helical span at residues 41–66 (TLLTLGNVLLLLTMYQWWRDIIREGT). Over 67-72 (FQGHHT) the chain is Mitochondrial matrix. A helical transmembrane segment spans residues 73 to 105 (PPVQKGLRYGMILFITSEVFFFLGFFWAFYHAS). Residues 106-128 (LAPTPELGGCWPPTGITTLDPFE) are Mitochondrial intermembrane-facing. Residues 129 to 152 (VPLLNTAVLLASGVTVTWAHHSIM) form a helical membrane-spanning segment. The Mitochondrial matrix segment spans residues 153–155 (EGE). The chain crosses the membrane as a helical span at residues 156-183 (RKQTIQALTLTILLGFYFTFLQGMEYYE). At 184–190 (APFTIAD) the chain is on the mitochondrial intermembrane side. The chain crosses the membrane as a helical span at residues 191–223 (GVYGSTFFVATGFHGLHVIIGSTFLAVCLLRQV). Topologically, residues 224 to 232 (QYHFTSEHH) are mitochondrial matrix. A helical transmembrane segment spans residues 233–256 (FGFEAAAWYWHFVDVVWLFLYVSI). Residues 257-261 (YWWGS) lie on the Mitochondrial intermembrane side of the membrane.

It belongs to the cytochrome c oxidase subunit 3 family. As to quaternary structure, component of the cytochrome c oxidase (complex IV, CIV), a multisubunit enzyme composed of 14 subunits. The complex is composed of a catalytic core of 3 subunits MT-CO1, MT-CO2 and MT-CO3, encoded in the mitochondrial DNA, and 11 supernumerary subunits COX4I, COX5A, COX5B, COX6A, COX6B, COX6C, COX7A, COX7B, COX7C, COX8 and NDUFA4, which are encoded in the nuclear genome. The complex exists as a monomer or a dimer and forms supercomplexes (SCs) in the inner mitochondrial membrane with NADH-ubiquinone oxidoreductase (complex I, CI) and ubiquinol-cytochrome c oxidoreductase (cytochrome b-c1 complex, complex III, CIII), resulting in different assemblies (supercomplex SCI(1)III(2)IV(1) and megacomplex MCI(2)III(2)IV(2)).

Its subcellular location is the mitochondrion inner membrane. The enzyme catalyses 4 Fe(II)-[cytochrome c] + O2 + 8 H(+)(in) = 4 Fe(III)-[cytochrome c] + 2 H2O + 4 H(+)(out). Component of the cytochrome c oxidase, the last enzyme in the mitochondrial electron transport chain which drives oxidative phosphorylation. The respiratory chain contains 3 multisubunit complexes succinate dehydrogenase (complex II, CII), ubiquinol-cytochrome c oxidoreductase (cytochrome b-c1 complex, complex III, CIII) and cytochrome c oxidase (complex IV, CIV), that cooperate to transfer electrons derived from NADH and succinate to molecular oxygen, creating an electrochemical gradient over the inner membrane that drives transmembrane transport and the ATP synthase. Cytochrome c oxidase is the component of the respiratory chain that catalyzes the reduction of oxygen to water. Electrons originating from reduced cytochrome c in the intermembrane space (IMS) are transferred via the dinuclear copper A center (CU(A)) of subunit 2 and heme A of subunit 1 to the active site in subunit 1, a binuclear center (BNC) formed by heme A3 and copper B (CU(B)). The BNC reduces molecular oxygen to 2 water molecules using 4 electrons from cytochrome c in the IMS and 4 protons from the mitochondrial matrix. The protein is Cytochrome c oxidase subunit 3 (mt-co3) of Oncorhynchus masou (Cherry salmon).